The sequence spans 263 residues: Small ribosomal subunit protein uS2 (263 aa).

N-acetylserine is present on serine 2. Positions 213–223 are enriched in low complexity; it reads NAAEEARAGAT. The interval 213-245 is disordered; that stretch reads NAAEEARAGATEETEEVVAEAETEWNTETNVED. Residues 224–245 are compositionally biased toward acidic residues; that stretch reads EETEEVVAEAETEWNTETNVED.

This sequence belongs to the universal ribosomal protein uS2 family. As to quaternary structure, component of the small ribosomal subunit. Mature ribosomes consist of a small (40S) and a large (60S) subunit. The 40S subunit contains about 33 different proteins and 1 molecule of RNA (18S). The 60S subunit contains about 49 different proteins and 3 molecules of RNA (25S, 5.8S and 5S). Interacts with RPS21.

The protein localises to the cytoplasm. Functionally, required for the assembly and/or stability of the 40S ribosomal subunit. Required for the processing of the 20S rRNA-precursor to mature 18S rRNA in a late step of the maturation of 40S ribosomal subunits. This is Small ribosomal subunit protein uS2 from Clavispora lusitaniae (strain ATCC 42720) (Yeast).